The primary structure comprises 61 residues: Nakoroxin (61 aa).

Disulfide bonds link Cys-3–Cys-19, Cys-12–Cys-37, Cys-41–Cys-49, and Cys-50–Cys-55.

The protein belongs to the three-finger toxin family. Short-chain subfamily. In terms of tissue distribution, expressed by the venom gland.

Its subcellular location is the secreted. In terms of biological role, shows no cytotoxicity and does not inhibit the binding of alpha-bungarotoxin to nicotinic acetylcholine receptors of muscle and alpha-7/CHRNA7 types. However, it potentiates the binding of alpha-bungarotoxin to the acetylcholine-binding protein from Lymnaea stagnalis. The sequence is that of Nakoroxin from Naja kaouthia (Monocled cobra).